A 134-amino-acid polypeptide reads, in one-letter code: Small ribosomal subunit protein uS8c (134 aa).

It belongs to the universal ribosomal protein uS8 family. Part of the 30S ribosomal subunit.

Its subcellular location is the plastid. The protein resides in the chloroplast. In terms of biological role, one of the primary rRNA binding proteins, it binds directly to 16S rRNA central domain where it helps coordinate assembly of the platform of the 30S subunit. The polypeptide is Small ribosomal subunit protein uS8c (rps8) (Pelargonium hortorum (Common geranium)).